The sequence spans 225 residues: Ribonuclease 3 (225 aa).

The 123-residue stretch at 7 to 129 (IPRLCRTLGY…IIGAIYLDSD (123 aa)) folds into the RNase III domain. Glu42 is a Mg(2+) binding site. The active site involves Asp46. 2 residues coordinate Mg(2+): Asp115 and Glu118. Glu118 is a catalytic residue. The DRBM domain maps to 155–225 (DPKTLLQEHL…AAQVLELIKK (71 aa)).

Belongs to the ribonuclease III family. As to quaternary structure, homodimer. Requires Mg(2+) as cofactor.

Its subcellular location is the cytoplasm. The enzyme catalyses Endonucleolytic cleavage to 5'-phosphomonoester.. Its function is as follows. Digests double-stranded RNA. Involved in the processing of primary rRNA transcript to yield the immediate precursors to the large and small rRNAs (23S and 16S). Processes some mRNAs, and tRNAs when they are encoded in the rRNA operon. Processes pre-crRNA and tracrRNA of type II CRISPR loci if present in the organism. The polypeptide is Ribonuclease 3 (Shewanella piezotolerans (strain WP3 / JCM 13877)).